The primary structure comprises 104 residues: L-rhamnose mutarotase (104 aa).

Tyr18 serves as a coordination point for substrate. Residue His22 is the Proton donor of the active site. Substrate-binding positions include Tyr41 and Trp76 to Trp77.

This sequence belongs to the rhamnose mutarotase family. Homodimer.

Its subcellular location is the cytoplasm. The catalysed reaction is alpha-L-rhamnose = beta-L-rhamnose. The protein operates within carbohydrate metabolism; L-rhamnose metabolism. Involved in the anomeric conversion of L-rhamnose. The polypeptide is L-rhamnose mutarotase (Lachnoclostridium phytofermentans (strain ATCC 700394 / DSM 18823 / ISDg) (Clostridium phytofermentans)).